Consider the following 830-residue polypeptide: Dimethylglycine oxidase (830 aa).

Residues 14 to 15, 35 to 36, 45 to 48, L52, and V174 contribute to the FAD site; these read IV, DQ, and STSH. H48 is subject to Pros-8alpha-FAD histidine. Residues H225 and Y259 contribute to the active site. FAD is bound by residues Y259 and 360–363; that span reads VWVT. Y539 contributes to the (6S)-5,6,7,8-tetrahydrofolate binding site. D552 functions as the For 5,10-methylenetetrahydrofolate synthesis activity in the catalytic mechanism. (6S)-5,6,7,8-tetrahydrofolate contacts are provided by residues T554, G566, and 658–660; that span reads ELY.

This sequence belongs to the GcvT family. Requires FAD as cofactor.

The catalysed reaction is N,N-dimethylglycine + O2 + H2O = sarcosine + formaldehyde + H2O2. It carries out the reaction N,N-dimethylglycine + (6S)-5,6,7,8-tetrahydrofolate + O2 = sarcosine + (6R)-5,10-methylene-5,6,7,8-tetrahydrofolate + H2O2. In terms of biological role, catalyzes the oxidative demethylation of N,N-dimethylglycine to yield sarcosine, formaldehyde and hydrogen peroxide. The oxidation of dimethylglycine is coupled to the synthesis of 5,10-methylenetetrahydrofolate through an unusual substrate channeling mechanism. This channeling occurs by nonbiased diffusion of the iminium intermediate through a large solvent cavity connecting active site 1 (N-terminus) and active site 2 (C-terminus). The synthesis of 5,10-methylenetetrahydrofolate (at active site 2) prevents the accumulation of formaldehyde, formed by hydrolysis of the iminium intermediate product (at active site 1). Does not oxidize sarcosine. The polypeptide is Dimethylglycine oxidase (dmg) (Arthrobacter globiformis).